Here is a 133-residue protein sequence, read N- to C-terminus: Hydrogenase maturation factor HypA (133 aa).

His-2 lines the Ni(2+) pocket. Positions 73, 75, 105, and 108 each coordinate Zn(2+).

The protein belongs to the HypA/HybF family.

In terms of biological role, involved in the maturation of [NiFe] hydrogenases. Required for nickel insertion into the metal center of the hydrogenase. The sequence is that of Hydrogenase maturation factor HypA from Methanosarcina barkeri (strain Fusaro / DSM 804).